The primary structure comprises 132 residues: MEALGADVTQGLEKGSLITCADNTGARELKVISVHGYSGTKNRHPKAGLGDKITVSVTKGTPEMRRQVLEAVVVRQRKPIRRPDGTRVKFEDNAAVIVDENEDPRGTELKGPIAREVAQRFGSVASAATMIV.

It belongs to the universal ribosomal protein uL14 family. The L3/L14/L24e cluster may contact the 16S rRNA in 2 intersubunit bridges. Part of the 50S ribosomal subunit. Forms a cluster with proteins L3 and L24e.

Functionally, forms part of two intersubunit bridges in the 70S ribosome. Binds to 23S rRNA. This is Large ribosomal subunit protein uL14 from Haloarcula marismortui (strain ATCC 43049 / DSM 3752 / JCM 8966 / VKM B-1809) (Halobacterium marismortui).